The sequence spans 595 residues: DNA mismatch repair protein MutL (595 aa).

It belongs to the DNA mismatch repair MutL/HexB family.

Functionally, this protein is involved in the repair of mismatches in DNA. It is required for dam-dependent methyl-directed DNA mismatch repair. May act as a 'molecular matchmaker', a protein that promotes the formation of a stable complex between two or more DNA-binding proteins in an ATP-dependent manner without itself being part of a final effector complex. The chain is DNA mismatch repair protein MutL from Rhodopseudomonas palustris (strain ATCC BAA-98 / CGA009).